We begin with the raw amino-acid sequence, 199 residues long: Probable nicotinate-nucleotide adenylyltransferase (199 aa).

The protein belongs to the NadD family.

The catalysed reaction is nicotinate beta-D-ribonucleotide + ATP + H(+) = deamido-NAD(+) + diphosphate. Its pathway is cofactor biosynthesis; NAD(+) biosynthesis; deamido-NAD(+) from nicotinate D-ribonucleotide: step 1/1. Functionally, catalyzes the reversible adenylation of nicotinate mononucleotide (NaMN) to nicotinic acid adenine dinucleotide (NaAD). The polypeptide is Probable nicotinate-nucleotide adenylyltransferase (Roseiflexus castenholzii (strain DSM 13941 / HLO8)).